A 318-amino-acid chain; its full sequence is MPVRIPDHLPAAGVLESENIFVMSETRAANQDIRPMKVLILNLMPNKIETETQLLRLLGNTPLQVDVDLLRIHDKESKHTSIDHMNTFYRDFEDVRHKNYDGLIITGAPLGQIDFEDVVYWDHIREIIDWSQEHVTSVLFLCWAAHAGLYHLYGLNRKILQQKRSGVFVHRRTCQHFPLLRGFDDEFFAPHSRFAEMDVEDIRQHPQLQVLAQSDEAGAYLVLSRNNRNLFVMGHPEYQKSTLNDEYHRDLAQGLNPNVPQNYYRNNDPEAEAIARWHSHGSLLVSNWLNYYVYQLTPYDLSDMTAMTPWESRQETLP.

The active-site Acyl-thioester intermediate is Cys142. The substrate site is built by Lys163 and Ser192. His235 acts as the Proton acceptor in catalysis. Glu237 is a catalytic residue. A substrate-binding site is contributed by Arg249.

The protein belongs to the MetA family.

It localises to the cytoplasm. It catalyses the reaction L-homoserine + succinyl-CoA = O-succinyl-L-homoserine + CoA. Its pathway is amino-acid biosynthesis; L-methionine biosynthesis via de novo pathway; O-succinyl-L-homoserine from L-homoserine: step 1/1. Functionally, transfers a succinyl group from succinyl-CoA to L-homoserine, forming succinyl-L-homoserine. This is Homoserine O-succinyltransferase from Shewanella putrefaciens (strain CN-32 / ATCC BAA-453).